Here is a 536-residue protein sequence, read N- to C-terminus: MATRRQPLIPGWLIPGVSATTLVVAVALAAFLALWWNAPQDDWVAVWQDSYLWHVVRFSFWQAFLSALLSVIPAIFLARALYRRRFPGRLALLRLCAMTLILPVLVAVFGILSVYGRQGWLATLCQSLGLEWTFSPYGLQGILLAHVFFNLPMASRLLLQALENIPGEQRQLAAQLGMRSWHFFRFVEWPWLRRQIPPVAALIFMLCFASFATVLSLGGGPQATTIELAIYQALSYDYDPARAAMLALLQMVCCLGLVLLSQRLSKAIAPGTTLLQGWRDPDDRLHSRICDTVLIVLALLLLLPPLLAVIVDGVNRQLPEVLAQPVLWQALWTSLRIALAAGVLCVVLTMMLLWSSRELRARQKMLAGQVLEMSGMLILAMPGIVLATGFFLLLNNTIGLPQSADGIVIFTNALMAIPYALKVLENPMRDITARYSMLCQSLGIEGWSRLKVVELRALKRPLAQALAFACVLSIGDFGVVALFGNDDFRTLPFYLYQQIGSYRSQDGAVTALILLLLCFLLFTVIEKLPGRNVKTD.

A run of 12 helical transmembrane segments spans residues 12–32 (WLIPGVSATTLVVAVALAAFL), 58–78 (FSFWQAFLSALLSVIPAIFLA), 95–115 (LCAMTLILPVLVAVFGILSVY), 134–154 (FSPYGLQGILLAHVFFNLPMA), 199–219 (VAALIFMLCFASFATVLSLGG), 240–260 (PARAAMLALLQMVCCLGLVLL), 293–313 (VLIVLALLLLLPPLLAVIVDG), 334–354 (SLRIALAAGVLCVVLTMMLLW), 374–394 (SGMLILAMPGIVLATGFFLLL), 404–424 (ADGIVIFTNALMAIPYALKVL), 463–483 (AQALAFACVLSIGDFGVVALF), and 506–526 (DGAVTALILLLLCFLLFTVIE). An ABC transmembrane type-1 1 domain is found at 56–261 (VRFSFWQAFL…VCCLGLVLLS (206 aa)). The region spanning 331 to 525 (LWTSLRIALA…LLCFLLFTVI (195 aa)) is the ABC transmembrane type-1 2 domain.

Belongs to the binding-protein-dependent transport system permease family. CysTW subfamily. The complex is composed of two ATP-binding proteins (ThiQ), two transmembrane proteins (ThiP) and a solute-binding protein (ThiB).

The protein resides in the cell inner membrane. Transport is inhibited by the sulfhydryl-specific modifier N-ethylmaleimide. In terms of biological role, part of the ABC transporter complex ThiBPQ involved in thiamine import. Probably responsible for the translocation of the substrate across the membrane. This chain is Thiamine transport system permease protein ThiP (thiP), found in Escherichia coli (strain K12).